Here is a 539-residue protein sequence, read N- to C-terminus: Chaperonin GroEL (539 aa).

Residues 29 to 32 (TIGP), 86 to 90 (DGTTT), Gly-413, 476 to 478 (NAA), and Asp-492 each bind ATP.

This sequence belongs to the chaperonin (HSP60) family. In terms of assembly, forms a cylinder of 14 subunits composed of two heptameric rings stacked back-to-back. Interacts with the co-chaperonin GroES.

The protein resides in the cytoplasm. It carries out the reaction ATP + H2O + a folded polypeptide = ADP + phosphate + an unfolded polypeptide.. Functionally, together with its co-chaperonin GroES, plays an essential role in assisting protein folding. The GroEL-GroES system forms a nano-cage that allows encapsulation of the non-native substrate proteins and provides a physical environment optimized to promote and accelerate protein folding. This is Chaperonin GroEL from Leuconostoc mesenteroides subsp. mesenteroides (strain ATCC 8293 / DSM 20343 / BCRC 11652 / CCM 1803 / JCM 6124 / NCDO 523 / NBRC 100496 / NCIMB 8023 / NCTC 12954 / NRRL B-1118 / 37Y).